A 339-amino-acid chain; its full sequence is Mycothiol acetyltransferase (339 aa).

N-acetyltransferase domains lie at 8–174 and 176–339; these read YEQL…QGLT and LTYP…GELN. A 1D-myo-inositol 2-(L-cysteinylamino)-2-deoxy-alpha-D-glucopyranoside-binding site is contributed by glutamate 39. 85 to 87 is a binding site for acetyl-CoA; that stretch reads LAV. 1D-myo-inositol 2-(L-cysteinylamino)-2-deoxy-alpha-D-glucopyranoside contacts are provided by glutamate 207, lysine 254, and glutamate 270. 274-276 is an acetyl-CoA binding site; the sequence is VCL. Tyrosine 308 contacts 1D-myo-inositol 2-(L-cysteinylamino)-2-deoxy-alpha-D-glucopyranoside.

The protein belongs to the acetyltransferase family. MshD subfamily. As to quaternary structure, monomer.

The catalysed reaction is 1D-myo-inositol 2-(L-cysteinylamino)-2-deoxy-alpha-D-glucopyranoside + acetyl-CoA = mycothiol + CoA + H(+). Functionally, catalyzes the transfer of acetyl from acetyl-CoA to desacetylmycothiol (Cys-GlcN-Ins) to form mycothiol. The chain is Mycothiol acetyltransferase from Corynebacterium urealyticum (strain ATCC 43042 / DSM 7109).